A 227-amino-acid polypeptide reads, in one-letter code: Phosphoglycolate phosphatase (227 aa).

Residue Asp11 is the Nucleophile of the active site. Residues Asp11, Asp13, and Asp176 each coordinate Mg(2+).

The protein belongs to the HAD-like hydrolase superfamily. CbbY/CbbZ/Gph/YieH family. Requires Mg(2+) as cofactor.

The enzyme catalyses 2-phosphoglycolate + H2O = glycolate + phosphate. It participates in organic acid metabolism; glycolate biosynthesis; glycolate from 2-phosphoglycolate: step 1/1. In terms of biological role, specifically catalyzes the dephosphorylation of 2-phosphoglycolate. Is involved in the dissimilation of the intracellular 2-phosphoglycolate formed during the DNA repair of 3'-phosphoglycolate ends, a major class of DNA lesions induced by oxidative stress. The sequence is that of Phosphoglycolate phosphatase from Aliivibrio fischeri (strain ATCC 700601 / ES114) (Vibrio fischeri).